A 285-amino-acid chain; its full sequence is Acetylglutamate kinase (285 aa).

Substrate-binding positions include 64–65, Arg86, and Asn179; that span reads GG.

The protein belongs to the acetylglutamate kinase family. ArgB subfamily.

It is found in the plastid. It localises to the chloroplast. The enzyme catalyses N-acetyl-L-glutamate + ATP = N-acetyl-L-glutamyl 5-phosphate + ADP. It functions in the pathway amino-acid biosynthesis; L-arginine biosynthesis; N(2)-acetyl-L-ornithine from L-glutamate: step 2/4. Its function is as follows. Catalyzes the ATP-dependent phosphorylation of N-acetyl-L-glutamate. This Pyropia yezoensis (Susabi-nori) protein is Acetylglutamate kinase.